A 179-amino-acid chain; its full sequence is Putative DUP240 protein DFP1 (179 aa).

Helical transmembrane passes span 4 to 24 (FLLF…SGVL) and 26 to 46 (PAMV…IWSF).

This sequence belongs to the DUP/COS family.

It is found in the membrane. This chain is Putative DUP240 protein DFP1, found in Saccharomyces cerevisiae (strain ATCC 204508 / S288c) (Baker's yeast).